Reading from the N-terminus, the 320-residue chain is Acetyl-coenzyme A carboxylase carboxyl transferase subunit alpha (320 aa).

The CoA carboxyltransferase C-terminal domain maps to 33–294 (AFDTEIQALR…GDAVEDELKA (262 aa)).

It belongs to the AccA family. Acetyl-CoA carboxylase is a heterohexamer composed of biotin carboxyl carrier protein (AccB), biotin carboxylase (AccC) and two subunits each of ACCase subunit alpha (AccA) and ACCase subunit beta (AccD).

It localises to the cytoplasm. The catalysed reaction is N(6)-carboxybiotinyl-L-lysyl-[protein] + acetyl-CoA = N(6)-biotinyl-L-lysyl-[protein] + malonyl-CoA. It functions in the pathway lipid metabolism; malonyl-CoA biosynthesis; malonyl-CoA from acetyl-CoA: step 1/1. In terms of biological role, component of the acetyl coenzyme A carboxylase (ACC) complex. First, biotin carboxylase catalyzes the carboxylation of biotin on its carrier protein (BCCP) and then the CO(2) group is transferred by the carboxyltransferase to acetyl-CoA to form malonyl-CoA. This Caulobacter vibrioides (strain ATCC 19089 / CIP 103742 / CB 15) (Caulobacter crescentus) protein is Acetyl-coenzyme A carboxylase carboxyl transferase subunit alpha.